The sequence spans 247 residues: 2,3-bisphosphoglycerate-dependent phosphoglycerate mutase (247 aa).

Residues 8 to 15 (RHGESQWN), 21 to 22 (TG), R60, 87 to 90 (ERHY), K98, 114 to 115 (RR), and 183 to 184 (GN) contribute to the substrate site. Catalysis depends on H9, which acts as the Tele-phosphohistidine intermediate. E87 acts as the Proton donor/acceptor in catalysis.

It belongs to the phosphoglycerate mutase family. BPG-dependent PGAM subfamily.

The catalysed reaction is (2R)-2-phosphoglycerate = (2R)-3-phosphoglycerate. It functions in the pathway carbohydrate degradation; glycolysis; pyruvate from D-glyceraldehyde 3-phosphate: step 3/5. Its function is as follows. Catalyzes the interconversion of 2-phosphoglycerate and 3-phosphoglycerate. In Prosthecochloris aestuarii (strain DSM 271 / SK 413), this protein is 2,3-bisphosphoglycerate-dependent phosphoglycerate mutase.